Consider the following 761-residue polypeptide: Probable beta-galactosidase 2 (761 aa).

Residues 1–23 (MGTIKNNFQLLWLILLIVVLVNG) form the signal peptide. N39 and N110 each carry an N-linked (GlcNAc...) asparagine glycan. E195 serves as the catalytic Proton donor. N-linked (GlcNAc...) asparagine glycosylation is present at N206. Residue E267 is the Nucleophile of the active site. N385, N405, N438, N501, N552, N553, N577, N592, N642, N690, and N696 each carry an N-linked (GlcNAc...) asparagine glycan.

This sequence belongs to the glycosyl hydrolase 35 family.

It catalyses the reaction Hydrolysis of terminal non-reducing beta-D-galactose residues in beta-D-galactosides.. In terms of biological role, cleaves beta-linked terminal galactosyl residues from gangliosides, glycoproteins, and glycosaminoglycans. The chain is Probable beta-galactosidase 2 (glb2) from Dictyostelium discoideum (Social amoeba).